The chain runs to 366 residues: Adenosine deaminase (366 aa).

Residues histidine 19 and histidine 21 each coordinate Zn(2+). Substrate contacts are provided by histidine 21, aspartate 23, and glycine 181. Histidine 208 contributes to the Zn(2+) binding site. Glutamate 211 acts as the Proton donor in catalysis. Aspartate 304 serves as a coordination point for Zn(2+).

This sequence belongs to the metallo-dependent hydrolases superfamily. Adenosine and AMP deaminases family. Adenosine deaminase subfamily. It depends on Zn(2+) as a cofactor.

The enzyme catalyses adenosine + H2O + H(+) = inosine + NH4(+). It catalyses the reaction 2'-deoxyadenosine + H2O + H(+) = 2'-deoxyinosine + NH4(+). Catalyzes the hydrolytic deamination of adenosine and 2-deoxyadenosine. This Mycobacterium avium (strain 104) protein is Adenosine deaminase.